Reading from the N-terminus, the 436-residue chain is MNIIVVGLSHKTAPVEVRERVAFSPNLIERPLRELVSLDDISEGVIVSTCNRVEIYATTHDIAGGTARIKRFLADHHRIPLESLEQYLYSYHSEAAIRHVFRVASSLDSMVVGEPQILGQIKTAYGYAAEYRTSGTILNRFLHKAFSVAKRVRTETRIASSAVSVAFAAVELARKILGDLSGKTVMLIGAGEMCELAAKHFLTSGARGLLVANRTFAKGERLAAEFGGEAIPFEELFQELHRADIVLSSTGAPHTIIAPRDVEAVVKRRKFKPMFFIDIAVPRDIDPRVNDLESAYLFTVDDLQEIVEANMAQRNQEASKGEEIVEQEIGQFHCWLSSLESTPTIVALRARFEEIRRAELEKTLCGWKDLSPEAEKRLEIMTLSIMNKLLHTPTAVLKRAGQGGRTDLYTDALRQLFDLQTSRQDDDELELELEEE.

Residues 49-52, Ser109, 114-116, and Gln120 contribute to the substrate site; these read TCNR and EPQ. Catalysis depends on Cys50, which acts as the Nucleophile. 189–194 is an NADP(+) binding site; sequence GAGEMC.

This sequence belongs to the glutamyl-tRNA reductase family. As to quaternary structure, homodimer.

The enzyme catalyses (S)-4-amino-5-oxopentanoate + tRNA(Glu) + NADP(+) = L-glutamyl-tRNA(Glu) + NADPH + H(+). It participates in porphyrin-containing compound metabolism; protoporphyrin-IX biosynthesis; 5-aminolevulinate from L-glutamyl-tRNA(Glu): step 1/2. Catalyzes the NADPH-dependent reduction of glutamyl-tRNA(Glu) to glutamate 1-semialdehyde (GSA). The polypeptide is Glutamyl-tRNA reductase (Pelobacter propionicus (strain DSM 2379 / NBRC 103807 / OttBd1)).